Reading from the N-terminus, the 224-residue chain is MVILSNVSLFSCCNISQKPSLFSPSSRSSHCPIRCSQSQEGKEVVTSPLRSVVWSLGEEVSKRSLFALVSASLFFVDPALAFKGGGPYGQGVTRGQDLSGKDFSGQTLIRQDFKTSILRQANFKGAKLLGASFFDADLTGADLSEADLRGADFSLANVTKVNLTNANLEGATVTGNTSFKGSNITGADFTDVPLRDDQRVYLCKVADGVNATTGNATRDTLLCN.

The transit peptide at 1–34 (MVILSNVSLFSCCNISQKPSLFSPSSRSSHCPIR) directs the protein to the chloroplast. A thylakoid-targeting transit peptide spans 35-81 (CSQSQEGKEVVTSPLRSVVWSLGEEVSKRSLFALVSASLFFVDPALA). Pentapeptide repeat domains lie at 116-155 (SILR…DFSL) and 156-196 (ANVT…PLRD).

It is found in the plastid. The protein resides in the chloroplast thylakoid lumen. The protein is Thylakoid lumenal 15 kDa protein 1, chloroplastic of Arabidopsis thaliana (Mouse-ear cress).